The sequence spans 35 residues: Cycloamanide F proprotein (35 aa).

Residues 1-10 constitute a propeptide that is removed on maturation; that stretch reads MSDINATRLP. Positions 11-18 form a cross-link, cyclopeptide (Ile-Pro); it reads IVGILGLP. Residues 19–35 constitute a propeptide that is removed on maturation; sequence CIGDDVNSTLTHGEDLC.

This sequence belongs to the MSDIN fungal toxin family. In terms of processing, processed by the macrocyclase-peptidase enzyme POPB to yield a cyclic decapeptide. POPB first removes 10 residues from the N-terminus. Conformational trapping of the remaining peptide forces the enzyme to release this intermediate rather than proceed to macrocyclization. The enzyme rebinds the remaining peptide in a different conformation and catalyzes macrocyclization of the N-terminal 8 residues.

Cyclic octapeptide that belongs to the MSDIN-like toxin family responsible for a large number of food poisoning cases and deaths. Cycloaminide E is structurally related to other cycloamanides that are non-toxic to mammals but show immunosuppressive activity. The chain is Cycloamanide F proprotein from Amanita phalloides (Death cap).